Consider the following 209-residue polypeptide: Kynurenine formamidase (209 aa).

W19 is a binding site for substrate. H49, H53, and D55 together coordinate Zn(2+). H59 (proton donor/acceptor) is an active-site residue. Residues H160 and E172 each contribute to the Zn(2+) site.

It belongs to the Cyclase 1 superfamily. KynB family. In terms of assembly, homodimer. It depends on Zn(2+) as a cofactor.

The catalysed reaction is N-formyl-L-kynurenine + H2O = L-kynurenine + formate + H(+). It functions in the pathway amino-acid degradation; L-tryptophan degradation via kynurenine pathway; L-kynurenine from L-tryptophan: step 2/2. In terms of biological role, catalyzes the hydrolysis of N-formyl-L-kynurenine to L-kynurenine, the second step in the kynurenine pathway of tryptophan degradation. The protein is Kynurenine formamidase of Geobacillus thermodenitrificans (strain NG80-2).